A 408-amino-acid chain; its full sequence is LL-diaminopimelate aminotransferase (408 aa).

Residues Tyr-15 and Gly-42 each contribute to the substrate site. Residues Tyr-72, 108 to 109 (SK), Tyr-132, Asn-187, Tyr-218, and 246 to 248 (SFS) each bind pyridoxal 5'-phosphate. The substrate site is built by Lys-109, Tyr-132, and Asn-187. Lys-249 is subject to N6-(pyridoxal phosphate)lysine. 2 residues coordinate pyridoxal 5'-phosphate: Arg-257 and Asn-292. Substrate is bound by residues Asn-292 and Arg-388.

It belongs to the class-I pyridoxal-phosphate-dependent aminotransferase family. LL-diaminopimelate aminotransferase subfamily. In terms of assembly, homodimer. Requires pyridoxal 5'-phosphate as cofactor.

The enzyme catalyses (2S,6S)-2,6-diaminopimelate + 2-oxoglutarate = (S)-2,3,4,5-tetrahydrodipicolinate + L-glutamate + H2O + H(+). It participates in amino-acid biosynthesis; L-lysine biosynthesis via DAP pathway; LL-2,6-diaminopimelate from (S)-tetrahydrodipicolinate (aminotransferase route): step 1/1. In terms of biological role, involved in the synthesis of meso-diaminopimelate (m-DAP or DL-DAP), required for both lysine and peptidoglycan biosynthesis. Catalyzes the direct conversion of tetrahydrodipicolinate to LL-diaminopimelate. This Prochlorococcus marinus (strain AS9601) protein is LL-diaminopimelate aminotransferase.